Consider the following 445-residue polypeptide: Phosphoglucosamine mutase (445 aa).

Ser-102 (phosphoserine intermediate) is an active-site residue. Residues Ser-102, Asp-241, Asp-243, and Asp-245 each contribute to the Mg(2+) site. Ser-102 is modified (phosphoserine).

It belongs to the phosphohexose mutase family. Mg(2+) is required as a cofactor. Post-translationally, activated by phosphorylation.

The enzyme catalyses alpha-D-glucosamine 1-phosphate = D-glucosamine 6-phosphate. In terms of biological role, catalyzes the conversion of glucosamine-6-phosphate to glucosamine-1-phosphate. This is Phosphoglucosamine mutase from Shewanella baltica (strain OS155 / ATCC BAA-1091).